A 524-amino-acid chain; its full sequence is Lycopene epsilon cyclase, chloroplastic (524 aa).

The N-terminal 45 residues, 1–45 (MECVGARNFAAMAVSTFPSWSCRRKFPVVKRYSYRNIRFGLCSVR), are a transit peptide targeting the chloroplast. An NAD(+)-binding site is contributed by 111–139 (LVVIGCGPAGLALAAESAKLGLKVGLIGP). 2 helical membrane-spanning segments follow: residues 441-461 (FFLFGLALIVQFDTEGIRSFF) and 475-495 (FLGSTLTSGDLVLFALYMFVI).

It belongs to the lycopene cyclase family.

Its subcellular location is the plastid. It is found in the chloroplast membrane. The enzyme catalyses a carotenoid psi-end group = a carotenoid epsilon-end group. The protein operates within carotenoid biosynthesis; alpha-zeacarotene biosynthesis. It functions in the pathway carotenoid biosynthesis; delta-carotene biosynthesis. Functionally, involved in carotenoid biosynthesis. Catalyzes the single epsilon-cyclization reaction which converts lycopene to delta-carotene and neurosporene to alpha-zeacarotene. Required for lutein biosynthesis. This is Lycopene epsilon cyclase, chloroplastic from Arabidopsis thaliana (Mouse-ear cress).